The chain runs to 405 residues: Arginine biosynthesis bifunctional protein ArgJ (405 aa).

Positions 152, 178, 189, 276, 400, and 405 each coordinate substrate. The active-site Nucleophile is Thr-189.

Belongs to the ArgJ family. In terms of assembly, heterotetramer of two alpha and two beta chains.

Its subcellular location is the cytoplasm. It catalyses the reaction N(2)-acetyl-L-ornithine + L-glutamate = N-acetyl-L-glutamate + L-ornithine. It carries out the reaction L-glutamate + acetyl-CoA = N-acetyl-L-glutamate + CoA + H(+). The protein operates within amino-acid biosynthesis; L-arginine biosynthesis; L-ornithine and N-acetyl-L-glutamate from L-glutamate and N(2)-acetyl-L-ornithine (cyclic): step 1/1. Its pathway is amino-acid biosynthesis; L-arginine biosynthesis; N(2)-acetyl-L-ornithine from L-glutamate: step 1/4. Functionally, catalyzes two activities which are involved in the cyclic version of arginine biosynthesis: the synthesis of N-acetylglutamate from glutamate and acetyl-CoA as the acetyl donor, and of ornithine by transacetylation between N(2)-acetylornithine and glutamate. This Pseudomonas syringae pv. syringae (strain B728a) protein is Arginine biosynthesis bifunctional protein ArgJ.